We begin with the raw amino-acid sequence, 736 residues long: Probable potassium transport system protein Kup 2 (736 aa).

Transmembrane regions (helical) follow at residues 1-21, 42-62, 84-104, 126-146, 156-176, 204-224, 239-259, 287-307, 334-354, 364-384, 390-410, and 414-434; these read MAIVALGVVYGDIGTSPLYTA, MLSLVFWSITLITTVKYVLIA, GAWLAIPAMLGGAAFLADSVL, LFDENPSLTLMITVVIIVILF, IGKVFGSMVLVWFGFLAIVGV, AAGIALMGTVFLSTTGAEALY, WPFIKVALVLNYFGQGAWMLA, AVILSVSAGVIASQALITGAF, LYIPVVNGVLCVSTLAVLAIF, YGLALTITMITTTVLLGVYLW, VGAIVFTVLFLAIQAMFFIAS, and FLHGGWFTMLLTAAILFVMYT. Disordered stretches follow at residues 649 to 678 and 693 to 736; these read TDTAKTIPTPTPTRAVADPAAVPDPMDTTS and AEAR…KQKR. Composition is skewed to low complexity over residues 660 to 677 and 700 to 709; these read PTRAVADPAAVPDPMDTT and EAAAADAPAE. The segment covering 710 to 721 has biased composition (basic and acidic residues); it reads QGDKGDKGKAEN.

This sequence belongs to the HAK/KUP transporter (TC 2.A.72) family.

The protein localises to the cell membrane. The enzyme catalyses K(+)(in) + H(+)(in) = K(+)(out) + H(+)(out). Functionally, transport of potassium into the cell. Likely operates as a K(+):H(+) symporter. This is Probable potassium transport system protein Kup 2 from Bifidobacterium longum (strain NCC 2705).